Consider the following 426-residue polypeptide: Enolase (426 aa).

A (2R)-2-phosphoglycerate-binding site is contributed by Gln-163. Glu-205 (proton donor) is an active-site residue. Mg(2+) contacts are provided by Asp-242, Glu-286, and Asp-313. Positions 338, 367, 368, and 389 each coordinate (2R)-2-phosphoglycerate. Lys-338 functions as the Proton acceptor in the catalytic mechanism.

Belongs to the enolase family. It depends on Mg(2+) as a cofactor.

The protein localises to the cytoplasm. Its subcellular location is the secreted. It localises to the cell surface. The catalysed reaction is (2R)-2-phosphoglycerate = phosphoenolpyruvate + H2O. It participates in carbohydrate degradation; glycolysis; pyruvate from D-glyceraldehyde 3-phosphate: step 4/5. In terms of biological role, catalyzes the reversible conversion of 2-phosphoglycerate (2-PG) into phosphoenolpyruvate (PEP). It is essential for the degradation of carbohydrates via glycolysis. This is Enolase from Helicobacter pylori (strain P12).